Reading from the N-terminus, the 192-residue chain is MEYRSLTLDDFLSRFQLLRPQINRETLNHRQAAVLIPIVRRPQPGLLLTQRSIHLRKHAGQVAFPGGAVDDTDASVIAAALREAEEEVAIPPSAVEVIGVLPPVDSVTGYQVTPVVGIIPPDLPYRASEDEVSAVFEMPLAQALHLGRYHPLDIYRRGDSHRVWLSWYEQYFVWGMTAGIIRELALQIGVKP.

The region spanning 29–160 (HRQAAVLIPI…PLDIYRRGDS (132 aa)) is the Nudix hydrolase domain. A Nudix box motif is present at residues 67–89 (GAVDDTDASVIAAALREAEEEVA). Mg(2+)-binding residues include E83 and E87.

This sequence belongs to the Nudix hydrolase family. PCD1 subfamily. Requires Mn(2+) as cofactor. It depends on Mg(2+) as a cofactor.

Functionally, probably mediates the hydrolysis of some nucleoside diphosphate derivatives. This is an uncharacterized protein from Escherichia coli (strain SE11).